The chain runs to 167 residues: Peptide deformylase (167 aa).

Residues C90 and H132 each coordinate Fe cation. E133 is an active-site residue. H136 lines the Fe cation pocket.

Belongs to the polypeptide deformylase family. Fe(2+) serves as cofactor.

The catalysed reaction is N-terminal N-formyl-L-methionyl-[peptide] + H2O = N-terminal L-methionyl-[peptide] + formate. Functionally, removes the formyl group from the N-terminal Met of newly synthesized proteins. Requires at least a dipeptide for an efficient rate of reaction. N-terminal L-methionine is a prerequisite for activity but the enzyme has broad specificity at other positions. The chain is Peptide deformylase from Dehalococcoides mccartyi (strain CBDB1).